The following is a 932-amino-acid chain: RNA-binding protein 12 (932 aa).

Residues Ile97–Arg116 are disordered. Low complexity predominate over residues Pro98 to Arg116. An RRM 1 domain is found at Leu304 to Glu379. Residues Ser352 and Ser375 each carry the phosphoserine modification. Polar residues-rich tracts occupy residues Lys392–Thr401 and Leu408–Gln417. The segment at Lys392 to Ser424 is disordered. A phosphoserine mark is found at Ser420, Ser422, and Ser424. Residues Phe430–Lys507 enclose the RRM 2 domain. Ser525 is subject to Phosphoserine. The span at Asn717 to Gly734 shows a compositional bias: low complexity. The segment at Asn717–Pro855 is disordered. The segment covering Ser783 to Gly811 has biased composition (gly residues). Over residues Ala824–Gly838 the composition is skewed to pro residues. Residues Gly856–Tyr932 enclose the RRM 3 domain.

The protein localises to the nucleus. The sequence is that of RNA-binding protein 12 (RBM12) from Pongo abelii (Sumatran orangutan).